The chain runs to 551 residues: mRNA cap guanine-N(7) methyltransferase (551 aa).

Over residues 1-10 (MENRSSSGTP) the composition is skewed to polar residues. The segment at 1-152 (MENRSSSGTP…DRETLRRRQE (152 aa)) is disordered. Composition is skewed to basic and acidic residues over residues 48–76 (VTEE…EERH) and 141–152 (LVDRETLRRRQE). The region spanning 194–551 (SKIKGLRSFN…FYHAFCFYKV (358 aa)) is the mRNA cap 0 methyltransferase domain. MRNA is bound at residue 203–204 (NN). Residues Lys-207, Gly-250, Asp-274, Asp-312, 355–357 (MFA), and Tyr-360 each bind S-adenosyl-L-methionine. The disordered stretch occupies residues 407–430 (KAREEQEKKEKSDEAPEDGEVEED). A compositionally biased stretch (basic and acidic residues) spans 408 to 420 (AREEQEKKEKSDE). Acidic residues predominate over residues 421 to 430 (APEDGEVEED).

It belongs to the class I-like SAM-binding methyltransferase superfamily. mRNA cap 0 methyltransferase family.

It localises to the nucleus. The enzyme catalyses a 5'-end (5'-triphosphoguanosine)-ribonucleoside in mRNA + S-adenosyl-L-methionine = a 5'-end (N(7)-methyl 5'-triphosphoguanosine)-ribonucleoside in mRNA + S-adenosyl-L-homocysteine. In terms of biological role, responsible for methylating the 5'-cap structure of mRNAs. The chain is mRNA cap guanine-N(7) methyltransferase (abd1) from Aspergillus clavatus (strain ATCC 1007 / CBS 513.65 / DSM 816 / NCTC 3887 / NRRL 1 / QM 1276 / 107).